The chain runs to 429 residues: Autophagy-related protein 18 (429 aa).

WD repeat units lie at residues 1 to 36 (MAMN…KSYE), 69 to 114 (KRQS…LLYT), 139 to 182 (PLPQ…AINV), 185 to 225 (AHRS…KLYQ), 230 to 269 (SMPS…SSPD), 309 to 355 (KHNG…AWFK), and 367 to 407 (VNNG…GGEG). The L/FRRG motif signature appears at 226–230 (FRRGS). Over residues 262 to 275 (SHPTSSPDASPSSP) the composition is skewed to low complexity. The segment at 262–308 (SHPTSSPDASPSSPVGRDRSLSQSSSGYSPDRGDLTGDVGSSDFPAR) is disordered.

It belongs to the WD repeat PROPPIN family. In terms of assembly, component of the PI(3,5)P2 regulatory complex.

It localises to the preautophagosomal structure membrane. It is found in the vacuole membrane. The protein localises to the endosome membrane. Its function is as follows. The PI(3,5)P2 regulatory complex regulates both the synthesis and turnover of phosphatidylinositol 3,5-bisphosphate (PtdIns(3,5)P2). Necessary for proper vacuole morphology. Plays an important role in osmotically-induced vacuole fragmentation. Required for cytoplasm to vacuole transport (Cvt) vesicle formation, pexophagy and starvation-induced autophagy. Involved in correct atg9 trafficking to the pre-autophagosomal structure. Might also be involved in premeiotic DNA replication. The polypeptide is Autophagy-related protein 18 (atg18) (Neosartorya fischeri (strain ATCC 1020 / DSM 3700 / CBS 544.65 / FGSC A1164 / JCM 1740 / NRRL 181 / WB 181) (Aspergillus fischerianus)).